Here is a 771-residue protein sequence, read N- to C-terminus: Assimilatory nitrate reductase electron transfer subunit (771 aa).

An FAD-binding site is contributed by 43–79 (YNRILLSSVLQGEASLDDITLNSKDWYDKHGITLYTG). [2Fe-2S] cluster-binding residues include Cys414, Cys416, Cys449, and Cys452.

The cofactor is FAD. [2Fe-2S] cluster serves as cofactor.

In terms of biological role, required for nitrate assimilation. The sequence is that of Assimilatory nitrate reductase electron transfer subunit (nasB) from Bacillus subtilis (strain 168).